Reading from the N-terminus, the 217-residue chain is MTLKKHRGKMSEKSNVNKKFTNSTQNNSNWSNSPSMINPESFINNPNLIVFKNWVDKLQQEFPTCDVVDSKNNSITIKIRYDDVFRSIYKEVKKSVPDSKVSLKPCNDDKKYGMCMVVKSKTIIVGWEEWGFGKPIEISGEGEFTYYIPLENVINAFDSAWRMNNKGKPLHFKFMTRRLTPRDATTKGVSAEALSSPPTVGEIWHYITIEFVTVTTT.

Residues 1–32 (MTLKKHRGKMSEKSNVNKKFTNSTQNNSNWSN) form a disordered region. Residues 22–32 (NSTQNNSNWSN) show a composition bias toward low complexity.

This is an uncharacterized protein from Acidianus filamentous virus 2 (isolate Italy/Pozzuoli) (AFV-2).